The following is a 173-amino-acid chain: Ribosome maturation factor RimM (173 aa).

One can recognise a PRC barrel domain in the interval 95-169 (PDEFYDHELE…TIVIDPPEGL (75 aa)).

It belongs to the RimM family. Binds ribosomal protein uS19.

It is found in the cytoplasm. In terms of biological role, an accessory protein needed during the final step in the assembly of 30S ribosomal subunit, possibly for assembly of the head region. Essential for efficient processing of 16S rRNA. May be needed both before and after RbfA during the maturation of 16S rRNA. It has affinity for free ribosomal 30S subunits but not for 70S ribosomes. The sequence is that of Ribosome maturation factor RimM from Mycolicibacterium smegmatis (strain ATCC 700084 / mc(2)155) (Mycobacterium smegmatis).